We begin with the raw amino-acid sequence, 311 residues long: Acetyl-coenzyme A carboxylase carboxyl transferase subunit alpha (311 aa).

One can recognise a CoA carboxyltransferase C-terminal domain in the interval 34-286; that stretch reads EKDLQKEASK…KEYYLQNIRE (253 aa).

It belongs to the AccA family. As to quaternary structure, acetyl-CoA carboxylase is a heterohexamer composed of biotin carboxyl carrier protein (AccB), biotin carboxylase (AccC) and two subunits each of ACCase subunit alpha (AccA) and ACCase subunit beta (AccD).

It localises to the cytoplasm. The enzyme catalyses N(6)-carboxybiotinyl-L-lysyl-[protein] + acetyl-CoA = N(6)-biotinyl-L-lysyl-[protein] + malonyl-CoA. Its pathway is lipid metabolism; malonyl-CoA biosynthesis; malonyl-CoA from acetyl-CoA: step 1/1. Component of the acetyl coenzyme A carboxylase (ACC) complex. First, biotin carboxylase catalyzes the carboxylation of biotin on its carrier protein (BCCP) and then the CO(2) group is transferred by the carboxyltransferase to acetyl-CoA to form malonyl-CoA. The sequence is that of Acetyl-coenzyme A carboxylase carboxyl transferase subunit alpha from Nitratiruptor sp. (strain SB155-2).